We begin with the raw amino-acid sequence, 64 residues long: Large ribosomal subunit protein bL35 (64 aa).

Belongs to the bacterial ribosomal protein bL35 family.

The polypeptide is Large ribosomal subunit protein bL35 (Streptomyces avermitilis (strain ATCC 31267 / DSM 46492 / JCM 5070 / NBRC 14893 / NCIMB 12804 / NRRL 8165 / MA-4680)).